Here is a 251-residue protein sequence, read N- to C-terminus: Hydroxyacylglutathione hydrolase (251 aa).

Histidine 53, histidine 55, aspartate 57, histidine 58, histidine 110, aspartate 127, and histidine 165 together coordinate Zn(2+).

Belongs to the metallo-beta-lactamase superfamily. Glyoxalase II family. Monomer. It depends on Zn(2+) as a cofactor.

It catalyses the reaction an S-(2-hydroxyacyl)glutathione + H2O = a 2-hydroxy carboxylate + glutathione + H(+). Its pathway is secondary metabolite metabolism; methylglyoxal degradation; (R)-lactate from methylglyoxal: step 2/2. Its function is as follows. Thiolesterase that catalyzes the hydrolysis of S-D-lactoyl-glutathione to form glutathione and D-lactic acid. The protein is Hydroxyacylglutathione hydrolase of Yersinia pseudotuberculosis serotype IB (strain PB1/+).